Here is a 167-residue protein sequence, read N- to C-terminus: MEFAEAKKGKEYRIRNARLTDVDQIIKINRLALPENYPYYFFVEHLKEYEAAFFVAEVDGEVVGYIMPRIEWGFSNLKQLPTLVKKGHVVSIAVLEQYRRLGIGTALLQASMKAMKEVYNAEEVYLEVRVSNSPAINLYKKLGFKEVKVLRHYYADGEDAYLMAAPL.

The N-acetyltransferase domain maps to tyrosine 12–leucine 167. Tyrosine 37 serves as a coordination point for substrate. Histidine 88 lines the Zn(2+) pocket. Residues isoleucine 92 to valine 94 and arginine 100 to threonine 105 contribute to the acetyl-CoA site. Glutamate 127 contacts Zn(2+). Acetyl-CoA is bound by residues asparagine 132 and tyrosine 139–lysine 141. Tyrosine 154 provides a ligand contact to substrate.

It belongs to the acetyltransferase family. ARD1 subfamily. As to quaternary structure, homodimer.

Its subcellular location is the cytoplasm. The catalysed reaction is N-terminal L-alanyl-[protein] + acetyl-CoA = N-terminal N(alpha)-acetyl-L-alanyl-[protein] + CoA + H(+). The enzyme catalyses N-terminal L-seryl-[protein] + acetyl-CoA = N-terminal N(alpha)-acetyl-L-seryl-[protein] + CoA + H(+). It catalyses the reaction N-terminal L-methionyl-L-leucyl-[protein] + acetyl-CoA = N-terminal N(alpha)-acetyl-L-methionyl-L-leucyl-[protein] + CoA + H(+). It carries out the reaction N-terminal L-methionyl-L-glutamyl-[protein] + acetyl-CoA = N-terminal N(alpha)-acetyl-L-methionyl-L-glutamyl-[protein] + CoA + H(+). In terms of biological role, displays alpha (N-terminal) acetyltransferase activity. Catalyzes the covalent attachment of an acetyl moiety from acetyl-CoA to the free alpha-amino group at the N-terminus of a protein. The protein is N-alpha-acetyltransferase of Sulfurisphaera tokodaii (strain DSM 16993 / JCM 10545 / NBRC 100140 / 7) (Sulfolobus tokodaii).